We begin with the raw amino-acid sequence, 466 residues long: Ras GTPase-activating protein-binding protein 1 (466 aa).

The NTF2 domain maps to 11–133 (VGREFVRQYY…FYVHNDIFRY (123 aa)). Residues Lys36, Lys50, Lys59, Lys64, Lys76, and Lys123 each participate in a glycyl lysine isopeptide (Lys-Gly) (interchain with G-Cter in ubiquitin) cross-link. Residues 142–225 (VTEPQEESEE…EPVLEETAPE (84 aa)) are acidic disordered region. Thr143 carries the phosphothreonine modification. 2 disordered regions span residues 144–172 (EPQE…DSGT) and 184–243 (EEHL…QTVQ). Composition is skewed to acidic residues over residues 145–157 (PQEE…EEPE) and 185–206 (EHLE…EQEP). The residue at position 149 (Ser149) is a Phosphoserine. Ser231, Ser232, Ser250, and Ser253 each carry phosphoserine. The segment at 255–329 (TSKNLPPSGA…REAGEQGDIE (75 aa)) is disordered. Composition is skewed to basic and acidic residues over residues 297-307 (PQRDQRVREQR) and 318-329 (PIREAGEQGDIE). The region spanning 340-415 (HQLFIGNLPH…VRLNVEEKKT (76 aa)) is the RRM domain. Glycyl lysine isopeptide (Lys-Gly) (interchain with G-Cter in ubiquitin) cross-links involve residues Lys353 and Lys357. Residue Ser373 is modified to Phosphoserine. Lys376 is covalently cross-linked (Glycyl lysine isopeptide (Lys-Gly) (interchain with G-Cter in ubiquitin)). An N6-acetyllysine; alternate modification is found at Lys376. Residue Lys376 forms a Glycyl lysine isopeptide (Lys-Gly) (interchain with G-Cter in SUMO2); alternate linkage. Lys393 is covalently cross-linked (Glycyl lysine isopeptide (Lys-Gly) (interchain with G-Cter in ubiquitin); alternate). The RG-rich region stretch occupies residues 410 to 466 (VEEKKTRAAREGDRRDNRLRGPGGPRGGLGGGMRGPPRGGMVQKPGFGVGRGLAPRQ). A compositionally biased stretch (basic and acidic residues) spans 413–428 (KKTRAAREGDRRDNRL). Positions 413-466 (KKTRAAREGDRRDNRLRGPGGPRGGLGGGMRGPPRGGMVQKPGFGVGRGLAPRQ) are disordered. Arg429 bears the Asymmetric dimethylarginine mark. Residues 430 to 447 (GPGGPRGGLGGGMRGPPR) show a composition bias toward gly residues. Arg435 carries the post-translational modification Asymmetric dimethylarginine; alternate. Arg435 is subject to Dimethylated arginine; alternate. Residue Arg435 is modified to Omega-N-methylarginine; alternate. Arg447 is modified (omega-N-methylarginine). Arg460 bears the Dimethylated arginine; alternate mark. Arg460 carries the post-translational modification Omega-N-methylarginine; alternate. At Arg465 the chain carries Omega-N-methylarginine.

In terms of assembly, homodimer and oligomer. Component of a TAU mRNP complex, at least composed of IGF2BP1, ELAVL4 and G3BP1. Binds to the SH3 domain of Ras GTPase-activating protein (RASA1) in proliferating cells. No interaction in quiescent cells. Interacts (via NTF2 domain) with USP10; inhibiting stress granule formation by lowering G3BP1 valence. Interacts (via NTF2 domain) with CAPRIN1; promoting stress granule formation by lowering the saturation-concentration of G3BP1. Interacts (via NTF2 domain) with UBAP2L; promoting stress granule formation. Associates (via RG-rich region) with 40S ribosome subunits. Interacts with RPTOR and SPAG5; this complex is increased by oxidative stress. Interacts with ATXN2L. Interacts with STYXL1. Interacts with CGAS (via N-terminus); this interaction promotes the DNA-binding and activation of CGAS. Interacts (via C-terminus) with RIGI. Interacts with PABPC1. Interacts with QKI (isoforms QKI6 and QKI7); directing N(7)-methylguanine-containing mRNAs to stress granules. As to quaternary structure, (Microbial infection) Interacts with Semliki forest virus non-structural protein 3 (via C-terminus); this interaction inhibits the formation of stress granules on viral mRNAs and the nsp3-G3BP1 complexes bind viral RNAs and probably orchestrate the assembly of viral replication complexes. (Microbial infection) Interacts with Chikungunya virus non-structural protein 3 (via C-terminus); this interaction inhibits the formation of stress granules on viral mRNAs and the nsp3-G3BP1 complexes bind viral RNAs and probably orchestrate the assembly of viral replication complexes. In terms of assembly, (Microbial infection) Interacts with Sindbis virus non-structural protein 3 (via C-terminus); this interaction inhibits the formation of stress granules on viral mRNAs and the nsp3-G3BP1 complexes bind viral RNAs and probably orchestrate the assembly of viral replication complexes. As to quaternary structure, (Microbial infection) Interacts with Zika virus capsid protein C; this interaction is probably linked to the inhibition of stress granules formation by the virus. (Microbial infection) Interacts with reovirus type 2 protein sigma-NS; this interaction induces the relocalization of G3BP1 to the outer periphery of sigma-NS/mu-Ns viral factories and is probably involved in the suppression of the integrated stress response by the virus. In terms of assembly, (Microbial infection) Interacts with SARS-CoV-2 N protein; the interaction is enhanced by host HDAC6 which deacetylates the viral N protein and promotes N protein association with G3BP1, disrupting stress granule formation and facilitating viral replication. Interacts with HDAC6; the interaction increases during SARS-CoV-2 infection. Mg(2+) serves as cofactor. In terms of processing, phosphorylation of the acidic disordered region regulates stress granule assembly. RASA1-dependent phosphorylation of Ser-149 induces a conformational change that prevents self-association. Dephosphorylation after HRAS activation is required for stress granule assembly. Ser-149 phosphorylation induces partial nuclear localization. Post-translationally, ubiquitinated by TRIM21 via 'Lys-63'-linked polyubiquitination in the NTF2 domain in response to heat shock, leading to stress granule disassembly: ubiquitination promotes interaction with the FAF2 adapter, followed by interaction with VCP, which extracts G3BP1 from stress granules, leading to stress granule disassembly. In case of prolonged stress, ubiquitination by TRIM21 leads to autophagy-dependent degradation of G3BP1 via recruitment of ubiquitinated G3BP1 by SQSTM1 and/or CALCOCO2 to autophagosomes. (Microbial infection) Cleaved by human enterovirus 71; this cleavage induces the disassembly of cytoplasmic stress granules. Cleaved by Foot-and-mouth disease virus; this cleavage suppresses the formation of cytoplasmic stress granules. In terms of processing, arg-435 is dimethylated, probably to asymmetric dimethylarginine. Post-translationally, (Microbial infection) Cleaved by Encephalomyocarditis virus protease 3C; this cleavage suppresses the formation of cytoplasmic stress granules. In terms of tissue distribution, ubiquitous.

It is found in the cytoplasm. It localises to the cytosol. Its subcellular location is the perikaryon. The protein resides in the stress granule. The protein localises to the nucleus. The enzyme catalyses ATP + H2O = ADP + phosphate + H(+). With respect to regulation, under physiological conditions, G3BP1 adopts a compact state that is stabilized by intramolecular interactions between the RG-rich and the acidic regions that inhibit phase separation. Upon stress, polysomes disassemble and mRNAs are released in an unfolded protein-free state. Binding of unfolded mRNA to G3BP1 outcompetes the intramolecular interactions and RNA-bound G3BP1 adopts an expanded conformation in which the RG-rich region becomes exposed to engage in protein-protein and protein-RNA interactions, allowing physical cross-linking of RNA molecules to form protein-RNA condensates, leading to liquid-liquid phase separation (LLPS). Functionally, protein involved in various processes, such as stress granule formation and innate immunity. Plays an essential role in stress granule formation. Stress granules are membraneless compartments that store mRNAs and proteins, such as stalled translation pre-initiation complexes, in response to stress. Promotes formation of stress granules phase-separated membraneless compartment by undergoing liquid-liquid phase separation (LLPS) upon unfolded RNA-binding: functions as a molecular switch that triggers RNA-dependent LLPS in response to a rise in intracellular free RNA concentrations. Also acts as an ATP- and magnesium-dependent helicase: unwinds DNA/DNA, RNA/DNA, and RNA/RNA substrates with comparable efficiency. Acts unidirectionally by moving in the 5' to 3' direction along the bound single-stranded DNA. Unwinds preferentially partial DNA and RNA duplexes having a 17 bp annealed portion and either a hanging 3' tail or hanging tails at both 5'- and 3'-ends. Plays an essential role in innate immunity by promoting CGAS and RIGI activity. Participates in the DNA-triggered cGAS/STING pathway by promoting the DNA binding and activation of CGAS. Triggers the condensation of cGAS, a process probably linked to the formation of membrane-less organelles. Also enhances RIGI-induced type I interferon production probably by helping RIGI at sensing pathogenic RNA. May also act as a phosphorylation-dependent sequence-specific endoribonuclease in vitro: Cleaves exclusively between cytosine and adenine and cleaves MYC mRNA preferentially at the 3'-UTR. In Homo sapiens (Human), this protein is Ras GTPase-activating protein-binding protein 1.